The following is a 273-amino-acid chain: Eukaryotic translation initiation factor 3 subunit G-2 (273 aa).

The disordered stretch occupies residues 165–193 (KYVPPFMKDGGGGPGGKNWGRGRERDDSS). The segment covering 173–183 (DGGGGPGGKNW) has biased composition (gly residues). The RRM domain maps to 193 to 271 (SAVRISNLSE…LILCVEWSKP (79 aa)).

This sequence belongs to the eIF-3 subunit G family. Component of the eukaryotic translation initiation factor 3 (eIF-3) complex. The eIF-3 complex interacts with pix.

The protein resides in the cytoplasm. Functionally, RNA-binding component of the eukaryotic translation initiation factor 3 (eIF-3) complex, which is involved in protein synthesis of a specialized repertoire of mRNAs and, together with other initiation factors, stimulates binding of mRNA and methionyl-tRNAi to the 40S ribosome. The eIF-3 complex specifically targets and initiates translation of a subset of mRNAs involved in cell proliferation. This subunit can bind 18S rRNA. This chain is Eukaryotic translation initiation factor 3 subunit G-2, found in Drosophila yakuba (Fruit fly).